The primary structure comprises 78 residues: Acyl carrier protein (78 aa).

The Carrier domain occupies 1-76; it reads MAIHPKVKDI…DVASYLEKKG (76 aa). Ser-36 is subject to O-(pantetheine 4'-phosphoryl)serine.

Belongs to the acyl carrier protein (ACP) family. In terms of processing, 4'-phosphopantetheine is transferred from CoA to a specific serine of apo-ACP by AcpS. This modification is essential for activity because fatty acids are bound in thioester linkage to the sulfhydryl of the prosthetic group.

The protein resides in the cytoplasm. It participates in lipid metabolism; fatty acid biosynthesis. Carrier of the growing fatty acid chain in fatty acid biosynthesis. The sequence is that of Acyl carrier protein from Bdellovibrio bacteriovorus (strain ATCC 15356 / DSM 50701 / NCIMB 9529 / HD100).